Reading from the N-terminus, the 39-residue chain is STQMLSPPERPREFRHPNELRQYLKELNEYYAIMGRTRF.

Position 39 is a phenylalanine amide (Phe39).

Belongs to the NPY family. Neuronal somata and fibers.

It localises to the secreted. May have an important physiological role in neuroregulation. The polypeptide is Neuropeptide F (Cornu aspersum (Brown garden snail)).